The sequence spans 607 residues: Elongation factor 4 (607 aa).

The region spanning 11–193 is the tr-type G domain; it reads KNIRNFSIIA…KIVEVVPPPE (183 aa). Residues 23–28 and 140–143 contribute to the GTP site; these read DHGKST and NKID.

It belongs to the TRAFAC class translation factor GTPase superfamily. Classic translation factor GTPase family. LepA subfamily.

It is found in the cell membrane. It catalyses the reaction GTP + H2O = GDP + phosphate + H(+). Functionally, required for accurate and efficient protein synthesis under certain stress conditions. May act as a fidelity factor of the translation reaction, by catalyzing a one-codon backward translocation of tRNAs on improperly translocated ribosomes. Back-translocation proceeds from a post-translocation (POST) complex to a pre-translocation (PRE) complex, thus giving elongation factor G a second chance to translocate the tRNAs correctly. Binds to ribosomes in a GTP-dependent manner. This Staphylococcus saprophyticus subsp. saprophyticus (strain ATCC 15305 / DSM 20229 / NCIMB 8711 / NCTC 7292 / S-41) protein is Elongation factor 4.